The sequence spans 196 residues: Probable GTP-binding protein EngB (196 aa).

Positions 24 to 196 constitute an EngB-type G domain; that stretch reads ELSEVALSGR…IWNLIEPYIS (173 aa). Residues 32 to 39, 59 to 63, 77 to 80, 144 to 147, and 176 to 178 each bind GTP; these read GRSNVGKS, GKTQT, DVPG, TKED, and YSS. Positions 39 and 61 each coordinate Mg(2+).

It belongs to the TRAFAC class TrmE-Era-EngA-EngB-Septin-like GTPase superfamily. EngB GTPase family. It depends on Mg(2+) as a cofactor.

Necessary for normal cell division and for the maintenance of normal septation. In Staphylococcus aureus (strain MRSA252), this protein is Probable GTP-binding protein EngB.